Reading from the N-terminus, the 284-residue chain is 3-methyl-2-oxobutanoate hydroxymethyltransferase 2 (284 aa).

Mg(2+) contacts are provided by D49 and D88. Residues 49 to 50, D88, and K118 each bind 3-methyl-2-oxobutanoate; that span reads DS. E120 is a binding site for Mg(2+). E187 functions as the Proton acceptor in the catalytic mechanism.

The protein belongs to the PanB family. Homodecamer; pentamer of dimers. Requires Mg(2+) as cofactor.

The protein localises to the cytoplasm. The catalysed reaction is 3-methyl-2-oxobutanoate + (6R)-5,10-methylene-5,6,7,8-tetrahydrofolate + H2O = 2-dehydropantoate + (6S)-5,6,7,8-tetrahydrofolate. It functions in the pathway cofactor biosynthesis; (R)-pantothenate biosynthesis; (R)-pantoate from 3-methyl-2-oxobutanoate: step 1/2. Functionally, catalyzes the reversible reaction in which hydroxymethyl group from 5,10-methylenetetrahydrofolate is transferred onto alpha-ketoisovalerate to form ketopantoate. In Burkholderia cenocepacia (strain HI2424), this protein is 3-methyl-2-oxobutanoate hydroxymethyltransferase 2.